A 318-amino-acid polypeptide reads, in one-letter code: Carbamate kinase (318 aa).

It belongs to the carbamate kinase family.

The protein resides in the cytoplasm. The catalysed reaction is hydrogencarbonate + NH4(+) + ATP = carbamoyl phosphate + ADP + H2O + H(+). Its pathway is metabolic intermediate metabolism; carbamoyl phosphate degradation; CO(2) and NH(3) from carbamoyl phosphate: step 1/1. The polypeptide is Carbamate kinase (arcC) (Lentilactobacillus hilgardii (Lactobacillus hilgardii)).